Reading from the N-terminus, the 291-residue chain is Glycine--tRNA ligase alpha subunit (291 aa).

The protein belongs to the class-II aminoacyl-tRNA synthetase family. As to quaternary structure, tetramer of two alpha and two beta subunits.

Its subcellular location is the cytoplasm. It carries out the reaction tRNA(Gly) + glycine + ATP = glycyl-tRNA(Gly) + AMP + diphosphate. The sequence is that of Glycine--tRNA ligase alpha subunit from Rhizorhabdus wittichii (strain DSM 6014 / CCUG 31198 / JCM 15750 / NBRC 105917 / EY 4224 / RW1) (Sphingomonas wittichii).